The sequence spans 669 residues: DNA ligase (669 aa).

35 to 39 (DFEYD) provides a ligand contact to NAD(+). Residues 52–71 (YPEWDSPDSPTHRVGSDKTE) are disordered. The span at 61-71 (PTHRVGSDKTE) shows a compositional bias: basic and acidic residues. NAD(+) is bound by residues 84 to 85 (SL) and glutamate 115. The active-site N6-AMP-lysine intermediate is the lysine 117. Arginine 138, glutamate 175, lysine 290, and lysine 314 together coordinate NAD(+). Zn(2+) contacts are provided by cysteine 408, cysteine 411, cysteine 426, and cysteine 432. In terms of domain architecture, BRCT spans 590 to 669 (PVSARLAGKT…EEEFLRLIEE (80 aa)).

This sequence belongs to the NAD-dependent DNA ligase family. LigA subfamily. Mg(2+) serves as cofactor. Mn(2+) is required as a cofactor.

The catalysed reaction is NAD(+) + (deoxyribonucleotide)n-3'-hydroxyl + 5'-phospho-(deoxyribonucleotide)m = (deoxyribonucleotide)n+m + AMP + beta-nicotinamide D-nucleotide.. DNA ligase that catalyzes the formation of phosphodiester linkages between 5'-phosphoryl and 3'-hydroxyl groups in double-stranded DNA using NAD as a coenzyme and as the energy source for the reaction. It is essential for DNA replication and repair of damaged DNA. This Porphyromonas gingivalis (strain ATCC 33277 / DSM 20709 / CIP 103683 / JCM 12257 / NCTC 11834 / 2561) protein is DNA ligase.